A 730-amino-acid chain; its full sequence is 1,4-alpha-glucan branching enzyme GlgB (730 aa).

Residue Asp-405 is the Nucleophile of the active site. Glu-458 functions as the Proton donor in the catalytic mechanism.

It belongs to the glycosyl hydrolase 13 family. GlgB subfamily. Monomer.

It catalyses the reaction Transfers a segment of a (1-&gt;4)-alpha-D-glucan chain to a primary hydroxy group in a similar glucan chain.. It participates in glycan biosynthesis; glycogen biosynthesis. Its function is as follows. Catalyzes the formation of the alpha-1,6-glucosidic linkages in glycogen by scission of a 1,4-alpha-linked oligosaccharide from growing alpha-1,4-glucan chains and the subsequent attachment of the oligosaccharide to the alpha-1,6 position. The protein is 1,4-alpha-glucan branching enzyme GlgB of Haemophilus influenzae (strain 86-028NP).